The primary structure comprises 207 residues: MESKSPGYITPKKPALSASARKIKDNAADWHNLMLKWETYNNDSFNIASKIVNLKITAESADRMLLDEPSPNKDNITTDKVELDRLCSELLQTIENMEKIWTKMEKITATFKGICDLEAYQFPGDTSKPTHFHTWPTTLFYETSMKMVDMYKKEIQLKRTIVGDLAHTSDQDLRMVYLSCWLYQPYIDNNIKVLLESMLLETGHRPI.

Residues 78–99 (TDKVELDRLCSELLQTIENMEK) adopt a coiled-coil conformation.

This sequence belongs to the CINP family. In terms of assembly, homodimer. Part of the 55LCC heterohexameric ATPase complex.

It is found in the nucleus. In terms of biological role, component of the DNA replication complex, which interacts with two kinases, CDK2 and CDC7, thereby providing a functional and physical link between CDK2 and CDC7 during firing of the origins of replication. Regulates ATR-mediated checkpoint signaling in response to DNA damage. Part of the 55LCC heterohexameric ATPase complex which is chromatin-associated and promotes replisome proteostasis to maintain replication fork progression and genome stability. Required for replication fork progression, sister chromatid cohesion, and chromosome stability. The ATPase activity is specifically enhanced by replication fork DNA and is coupled to cysteine protease-dependent cleavage of replisome substrates in response to replication fork damage. Uses ATPase activity to process replisome substrates in S-phase, facilitating their proteolytic turnover from chromatin to ensure DNA replication and mitotic fidelity. As part of 55LCC complex, also involved in the cytoplasmic maturation steps of pre-60S ribosomal particles by promoting the release of shuttling protein RSL24D1/RLP24 from the pre-ribosomal particles. This chain is Cyclin-dependent kinase 2-interacting protein (cinp), found in Xenopus laevis (African clawed frog).